The chain runs to 358 residues: Nuclear receptor subfamily 1 group I member 3 (358 aa).

The segment at residues 18 to 93 is a DNA-binding region (nuclear receptor); that stretch reads PRNCVVCGDR…VGMRKDMILS (76 aa). An NR C4-type zinc finger spans residues 21 to 41; sequence CVVCGDRATGYHFHALTCEGC. A Phosphothreonine; by PKC modification is found at Thr48. Residues 57–81 form an NR C4-type zinc finger; it reads CPFAGRCEVSKAQRRHCPACRLQKC. Residues 119 to 358 form the NR LBD domain; the sequence is QQKELIQTLL…MMPLLGEICS (240 aa).

The protein belongs to the nuclear hormone receptor family. NR1 subfamily. In terms of assembly, heterodimer of NR1I3 and RXR. Interacts with PSMC4. Interacts with ECT2. Directly interacts with DNAJC7; this complex may also include HSP90. Interacts with CRY1. Interacts with CRY2 in a ligand-dependent manner. In terms of processing, phosphorylated at Thr-48 by PKC, dephosphorylation of Thr-48 is required for nuclear translocation and activation.

It is found in the nucleus. The protein resides in the cytoplasm. It localises to the cytoskeleton. Its function is as follows. Binds and transactivates the retinoic acid response elements that control expression of the retinoic acid receptor beta 2 and alcohol dehydrogenase 3 genes. Transactivates both the phenobarbital responsive element module of the human CYP2B6 gene and the CYP3A4 xenobiotic response element. This chain is Nuclear receptor subfamily 1 group I member 3 (Nr1i3), found in Rattus norvegicus (Rat).